The primary structure comprises 101 residues: Co-chaperonin GroES (101 aa).

It belongs to the GroES chaperonin family. In terms of assembly, heptamer of 7 subunits arranged in a ring. Interacts with the chaperonin GroEL.

It localises to the cytoplasm. Together with the chaperonin GroEL, plays an essential role in assisting protein folding. The GroEL-GroES system forms a nano-cage that allows encapsulation of the non-native substrate proteins and provides a physical environment optimized to promote and accelerate protein folding. GroES binds to the apical surface of the GroEL ring, thereby capping the opening of the GroEL channel. The sequence is that of Co-chaperonin GroES from Lawsonia intracellularis.